Consider the following 355-residue polypeptide: 3-dehydroquinate synthase (355 aa).

NAD(+) contacts are provided by residues Gly-105–Asp-109, Thr-129–Ser-130, Lys-142, Lys-151, and Thr-169–Thr-172. Residues Glu-184, His-246, and His-263 each contribute to the Zn(2+) site.

It belongs to the sugar phosphate cyclases superfamily. Dehydroquinate synthase family. It depends on NAD(+) as a cofactor. The cofactor is Co(2+). Requires Zn(2+) as cofactor.

The protein localises to the cytoplasm. The catalysed reaction is 7-phospho-2-dehydro-3-deoxy-D-arabino-heptonate = 3-dehydroquinate + phosphate. Its pathway is metabolic intermediate biosynthesis; chorismate biosynthesis; chorismate from D-erythrose 4-phosphate and phosphoenolpyruvate: step 2/7. Catalyzes the conversion of 3-deoxy-D-arabino-heptulosonate 7-phosphate (DAHP) to dehydroquinate (DHQ). This is 3-dehydroquinate synthase from Streptococcus agalactiae serotype III (strain NEM316).